Consider the following 191-residue polypeptide: Thymidine kinase (191 aa).

Residues 9–16 (GSMNSGKT) and 85–88 (DESQ) each bind ATP. Residue Glu86 is the Proton acceptor of the active site. The Zn(2+) site is built by Cys143, Cys146, Cys181, and Cys184.

Belongs to the thymidine kinase family. Homotetramer.

The protein localises to the cytoplasm. It carries out the reaction thymidine + ATP = dTMP + ADP + H(+). The polypeptide is Thymidine kinase (Listeria monocytogenes serotype 4b (strain F2365)).